A 395-amino-acid chain; its full sequence is Putative pyridoxal phosphate-dependent acyltransferase (395 aa).

110 to 111 (GF) lines the pyridoxal 5'-phosphate pocket. His135 contacts substrate. Pyridoxal 5'-phosphate contacts are provided by residues Ser185, 210–213 (DDAH), and 240–243 (TLSK). An N6-(pyridoxal phosphate)lysine modification is found at Lys243. Thr357 contributes to the substrate binding site.

It belongs to the class-II pyridoxal-phosphate-dependent aminotransferase family. Homodimer. Requires pyridoxal 5'-phosphate as cofactor.

The protein is Putative pyridoxal phosphate-dependent acyltransferase of Staphylococcus aureus (strain MRSA252).